A 631-amino-acid chain; its full sequence is 2-isopropylmalate synthase 2, chloroplastic (631 aa).

The N-terminal 46 residues, 1-46 (MESSILKSPNLSSPSFGVPSIPALSSSSTSPFSSLHLRSQNHRTIS), are a transit peptide targeting the chloroplast. A Pyruvate carboxyltransferase domain is found at 87-360 (VRIFDTTLRD…FTGIDTRHIV (274 aa)). A divalent metal cation contacts are provided by Asp96, His293, and Asn329.

This sequence belongs to the alpha-IPM synthase/homocitrate synthase family. LeuA type 1 subfamily. As to quaternary structure, homotetramer. Requires Mg(2+) as cofactor. It depends on Mn(2+) as a cofactor. Expressed in roots, stems, leaves, flowers and siliques.

The protein resides in the plastid. The protein localises to the chloroplast. It carries out the reaction 3-methyl-2-oxobutanoate + acetyl-CoA + H2O = (2S)-2-isopropylmalate + CoA + H(+). Its pathway is amino-acid biosynthesis; L-leucine biosynthesis; L-leucine from 3-methyl-2-oxobutanoate: step 1/4. With respect to regulation, feedback inhibition by Leu. In terms of biological role, catalyzes the condensation of the acetyl group of acetyl-CoA with 3-methyl-2-oxobutanoate (2-oxoisovalerate) to form 3-carboxy-3-hydroxy-4-methylpentanoate (2-isopropylmalate). Involved in Leu biosynthesis, but does not participate in the chain elongation of glucosinolates. The sequence is that of 2-isopropylmalate synthase 2, chloroplastic from Arabidopsis thaliana (Mouse-ear cress).